Reading from the N-terminus, the 186-residue chain is Superoxide dismutase [Cu-Zn] (186 aa).

An N-terminal signal peptide occupies residues 1–22 (MNMKTLLALAVSAVCSVSVAQA). Positions 79, 81, and 104 each coordinate Cu cation. Cysteines 86 and 182 form a disulfide. Positions 104, 113, 122, and 125 each coordinate Zn(2+). Position 160 (H160) interacts with Cu cation.

Belongs to the Cu-Zn superoxide dismutase family. In terms of assembly, homodimer. Requires Cu cation as cofactor. The cofactor is Zn(2+).

It is found in the periplasm. The catalysed reaction is 2 superoxide + 2 H(+) = H2O2 + O2. Functionally, destroys radicals which are normally produced within the cells and which are toxic to biological systems. The polypeptide is Superoxide dismutase [Cu-Zn] (sodC) (Neisseria meningitidis serogroup A / serotype 4A (strain DSM 15465 / Z2491)).